The following is a 122-amino-acid chain: Prefoldin subunit 1 (122 aa).

The residue at position 2 (A2) is an N-acetylalanine.

Belongs to the prefoldin subunit beta family. Heterohexamer of two PFD-alpha type and four PFD-beta type subunits.

Functionally, binds specifically to cytosolic chaperonin (c-CPN) and transfers target proteins to it. Binds to nascent polypeptide chain and promotes folding in an environment in which there are many competing pathways for nonnative proteins. This is Prefoldin subunit 1 (PFDN1) from Bos taurus (Bovine).